The chain runs to 429 residues: Histidine--tRNA ligase (429 aa).

This sequence belongs to the class-II aminoacyl-tRNA synthetase family. Homodimer.

It localises to the cytoplasm. The enzyme catalyses tRNA(His) + L-histidine + ATP = L-histidyl-tRNA(His) + AMP + diphosphate + H(+). This Alkalilimnicola ehrlichii (strain ATCC BAA-1101 / DSM 17681 / MLHE-1) protein is Histidine--tRNA ligase.